We begin with the raw amino-acid sequence, 815 residues long: uncharacterized protein (815 aa).

A signal peptide spans 1–25 (MVVMKKKRILIVSAIVLLFLTVASA). 6 helical membrane-spanning segments follow: residues 127–147 (FGEA…CVRG), 157–177 (ILFI…GYYM), 311–331 (SFIA…LAFF), 333–353 (FLLQ…FILA), 372–392 (VYLL…TCFI), and 401–421 (GFGM…IGFH). The interval 483 to 815 (KDGSNADGVT…DRLRRDERTR (333 aa)) is disordered. The segment covering 513–543 (HAISRTPQKETANGIANHNSRSLKRNPQTLS) has biased composition (polar residues). Composition is skewed to basic and acidic residues over residues 544 to 563 (KEQE…ENKQ) and 599 to 614 (QDKK…KEYV). A compositionally biased stretch (polar residues) spans 619–630 (KQPNNQQQTDDA). The segment covering 648-658 (ENEKDTERTDQ) has biased composition (basic and acidic residues). Positions 665–678 (EQNQNLETDQQQDF) are enriched in polar residues. The segment covering 696–705 (KTAEIKRSDQ) has biased composition (basic and acidic residues). The span at 720-732 (SPQSTKVENQPIA) shows a compositional bias: polar residues. Residues 734-757 (NERKIRPSEPAKVHSDGIRVDEKQ) show a composition bias toward basic and acidic residues. Polar residues predominate over residues 773-793 (PSSQTIKRTEQSVNSFDQVSL). The segment covering 796-815 (IARRSSSKVEDRLRRDERTR) has biased composition (basic and acidic residues).

It is found in the cell membrane. This is an uncharacterized protein from Bacillus subtilis (strain 168).